The sequence spans 205 residues: Guanylate kinase (205 aa).

In terms of domain architecture, Guanylate kinase-like spans 6-185; sequence GLLIVLSGPS…ACERIKAIVV (180 aa). 13–20 lines the ATP pocket; sequence GPSGVGKG.

Belongs to the guanylate kinase family.

The protein resides in the cytoplasm. It carries out the reaction GMP + ATP = GDP + ADP. Functionally, essential for recycling GMP and indirectly, cGMP. This Bacillus anthracis protein is Guanylate kinase.